We begin with the raw amino-acid sequence, 813 residues long: Leucine--tRNA ligase (813 aa).

Positions Ser-40–His-51 match the 'HIGH' region motif. The 'KMSKS' region signature appears at Lys-572–Ser-576. Lys-575 provides a ligand contact to ATP.

This sequence belongs to the class-I aminoacyl-tRNA synthetase family.

It is found in the cytoplasm. The enzyme catalyses tRNA(Leu) + L-leucine + ATP = L-leucyl-tRNA(Leu) + AMP + diphosphate. This is Leucine--tRNA ligase from Clostridium botulinum (strain ATCC 19397 / Type A).